The primary structure comprises 491 residues: Endoglucanase 14 (491 aa).

Positions 1 to 31 are cleaved as a signal peptide; sequence MSQLKIGSSQCLWTSICIVLFVLSMARGAVS. Residue aspartate 86 is the Nucleophile of the active site. Asparagine 397 is a glycosylation site (N-linked (GlcNAc...) asparagine). Catalysis depends on residues histidine 413, aspartate 465, and glutamate 474.

The protein belongs to the glycosyl hydrolase 9 (cellulase E) family.

The protein localises to the secreted. It catalyses the reaction Endohydrolysis of (1-&gt;4)-beta-D-glucosidic linkages in cellulose, lichenin and cereal beta-D-glucans.. This chain is Endoglucanase 14, found in Arabidopsis thaliana (Mouse-ear cress).